A 615-amino-acid polypeptide reads, in one-letter code: Matrix metalloproteinase-25 (615 aa).

A propeptide spanning residues Met1–Arg162 is cleaved from the precursor. A helical transmembrane segment spans residues Ile53–Pro73. The Cysteine switch motif lies at Pro143 to Val150. Zn(2+)-binding residues include Cys145 and His287. Glu288 is an active-site residue. His291 and His297 together coordinate Zn(2+). Positions Val336–Pro366 are disordered. Residues Leu349–Pro366 show a composition bias toward pro residues. 4 Hemopexin repeats span residues Pro368–Leu417, Val421–Pro466, Gly467–Pro515, and Phe516–Cys562. Residues Cys371 and Cys562 are joined by a disulfide bond. The tract at residues Ala547–Arg582 is disordered. Ala593 is lipidated: GPI-anchor amidated alanine. The propeptide at Ser594–Tyr615 is removed in mature form.

It belongs to the peptidase M10A family. The cofactor is Zn(2+). Requires Ca(2+) as cofactor. The precursor is cleaved by a furin endopeptidase.

It is found in the cell membrane. Its function is as follows. May activate progelatinase A. The protein is Matrix metalloproteinase-25 (Mmp25) of Mus musculus (Mouse).